Reading from the N-terminus, the 48-residue chain is Disintegrin accutin (48 aa).

Glutamine 1 carries the pyrrolidone carboxylic acid modification. One can recognise a Disintegrin domain in the interval 1–48 (QGAQCTAGPCCWPCKFLKEGTICRRARGDDLDDYCNGISADCPRNPYY). Disulfide bonds link cysteine 5/cysteine 11, cysteine 10/cysteine 35, and cysteine 23/cysteine 42. A Cell attachment site motif is present at residues 27 to 29 (RGD).

It belongs to the venom metalloproteinase (M12B) family. P-II subfamily. P-IIa sub-subfamily. In terms of assembly, monomer (disintegrin). In terms of tissue distribution, expressed by the venom gland.

It localises to the secreted. Its function is as follows. Inhibit human platelet aggregation induced by ADP, collagen, thrombin or the thromboxane analog U46619 in platelet suspension with IC(50) values of 66-267 nM. Acts by inhibiting fibrinogen interaction with platelet receptors GPIIb/GPIIIa (ITGA2B/ITGB3). It also inhibits angiogenesis in vivo and in vitro by blocking integrin alpha-V/beta-3 (ITGAV/ITGB3) of endothelial cells and by inducing apoptosis. This Deinagkistrodon acutus (Hundred-pace snake) protein is Disintegrin accutin.